Here is a 615-residue protein sequence, read N- to C-terminus: ATP-dependent zinc metalloprotease FtsH 2 (615 aa).

At 1-7 (MNEPNRN) the chain is on the cytoplasmic side. A helical transmembrane segment spans residues 8–28 (FFWIFFLILGIFWLQSVWFGS). Residues 29–99 (RTVQQIPYSQ…VTYRREIENT (71 aa)) lie on the Periplasmic side of the membrane. A helical membrane pass occupies residues 100 to 120 (FFRDLLSWVVPALIFVAVFLY). Residues 121–615 (FSRKFAEKGG…APQRERDLSV (495 aa)) lie on the Cytoplasmic side of the membrane. 195–202 (GPPGTGKT) provides a ligand contact to ATP. Position 418 (H418) interacts with Zn(2+). The active site involves E419. The Zn(2+) site is built by H422 and D495.

In the central section; belongs to the AAA ATPase family. This sequence in the C-terminal section; belongs to the peptidase M41 family. In terms of assembly, homohexamer. Requires Zn(2+) as cofactor.

Its subcellular location is the cell inner membrane. Functionally, acts as a processive, ATP-dependent zinc metallopeptidase for both cytoplasmic and membrane proteins. Plays a role in the quality control of integral membrane proteins. The chain is ATP-dependent zinc metalloprotease FtsH 2 from Bdellovibrio bacteriovorus (strain ATCC 15356 / DSM 50701 / NCIMB 9529 / HD100).